A 921-amino-acid polypeptide reads, in one-letter code: Phototropin-1A (921 aa).

Gly residues predominate over residues 1–11 (MASKGTEGGHG). Disordered regions lie at residues 1 to 59 (MASK…SPFL) and 88 to 118 (TGLP…QSAA). Positions 40-51 (SSASSFRTAAAA) are enriched in low complexity. The segment covering 97–117 (RPSSGSARTSSEDNPQQQQSA) has biased composition (polar residues). The PAS 1 domain maps to 123–197 (VSEELRAALS…KIRQSLANGS (75 aa)). FMN contacts are provided by residues 172-177 (NCRFLQ), R190, N205, N215, and Q236. C173 carries the post-translational modification S-4a-FMN cysteine. A PAC 1 domain is found at 197–251 (SNYCGRILNYKKDGTPFWNLLTIAPIKDEDGRLLKFIGMQVEVSKYTEGKKDTVV). A compositionally biased stretch (polar residues) spans 286–295 (RSLSESSNNT). Disordered stretches follow at residues 286–347 (RSLS…NRTR) and 364–390 (SVEK…ESFE). Basic and acidic residues-rich tracts occupy residues 312-321 (PSKRSSESGS) and 364-376 (SVEK…RDED). The PAS 2 domain maps to 400-473 (RGIDLATTLE…RKIRDAIDNQ (74 aa)). FMN contacts are provided by residues 449-454 (NCRFLQ), R467, N482, N492, and Q513. C450 carries the S-4a-FMN cysteine modification. The PAC 2 domain maps to 474–528 (AEVTVQLINYTKSGKKFWNLFHLQPMRDQKGDVQYFIGVQLDGTEHVQDDAAKEG). The Protein kinase domain occupies 594-881 (FRPVKPLGSG…ANEIKGHPFF (288 aa)). ATP contacts are provided by residues 600–608 (LGSGDTGSV) and K623. Catalysis depends on D719, which acts as the Proton acceptor.

Belongs to the protein kinase superfamily. Ser/Thr protein kinase family. In terms of assembly, homodimer. FMN serves as cofactor. Autophosphorylated in response to blue light irradiation. In terms of processing, 2 molecules of FMN bind covalently to cysteines after exposure to blue light and are reversed in the dark. As to expression, highly expressed in coleoptiles of dark-grown seedlings.

The enzyme catalyses L-seryl-[protein] + ATP = O-phospho-L-seryl-[protein] + ADP + H(+). It catalyses the reaction L-threonyl-[protein] + ATP = O-phospho-L-threonyl-[protein] + ADP + H(+). In terms of biological role, protein kinase that acts as a blue light photoreceptor in a signal-transduction pathway for phototropic responses. Regulates a wide range of physiological activities in plants that maximize the efficiency of photosynthesis, such as chloroplast relocations, stomata opening, and leaf expansion. The chain is Phototropin-1A (PHOT1A) from Oryza sativa subsp. japonica (Rice).